A 155-amino-acid polypeptide reads, in one-letter code: Probable Brix domain-containing ribosomal biogenesis protein (155 aa).

Positions 1–155 constitute a Brix domain; that stretch reads MLLTTSRKPS…LLIRDFRVGE (155 aa).

Probably involved in the biogenesis of the ribosome. The polypeptide is Probable Brix domain-containing ribosomal biogenesis protein (Methanothermobacter thermautotrophicus (strain ATCC 29096 / DSM 1053 / JCM 10044 / NBRC 100330 / Delta H) (Methanobacterium thermoautotrophicum)).